The chain runs to 628 residues: FAD-linked oxidoreductase hmp9 (628 aa).

The signal sequence occupies residues 1–29 (MFCIIRAQLLLLLHLLVLALLLVGTVCNA). The disordered stretch occupies residues 34–53 (GHPSELEPLALKRGGSPRDD). Asn-80 and Asn-133 each carry an N-linked (GlcNAc...) asparagine glycan. The FAD-binding PCMH-type domain maps to 152 to 337 (LGQLPVYAID…LKTKIKAYPN (186 aa)). Residue Asn-356 is glycosylated (N-linked (GlcNAc...) asparagine).

The protein belongs to the oxygen-dependent FAD-linked oxidoreductase family.

It participates in secondary metabolite biosynthesis. In terms of biological role, FAD-linked oxidoreductase; part of the gene cluster that mediates the biosynthesis of hypothemycin, a resorcylic acid lactone (RAL) that irreversibly inhibits a subset of protein kinases with a conserved cysteine in the ATP binding site such as human ERK2. The first step is performed by both PKSs hmp3 and hmp8 and leads to the production of 7',8'-dehydrozearalenol (DHZ). The highly reducing PKS hpm8 synthesizes the reduced hexaketide (7S,11S,2E,8E)-7,11-dihydroxy-dodeca-2,8-dienoate, which is transferred downstream to the non-reducing PKS hpm3. Hpm3 then extends the reduced hexaketide to a nonaketide, after which regioselective cyclization and macrolactonization affords DHZ. The next step is the conversion of DHZ into aigialomycin C and is performed by the O-methyltransferase hmp5, the FAD-binding monooxygenase hmp7, and the cytochrome P450 monooxygenase hmp1. The wide substrate tolerance of the hmp5 and hmp7 implies that the reactions from DHZ to aigialomycin C can occur in any order. The steps from aigialomycin C to hypothemycin are less well established. The FAD-linked oxidoreductase hmp9 presumably catalyzes oxidation of the C-6' hydroxyl to a ketone. The timing of this oxidation is important, since the resulting enone functional group is a Michael acceptor that can react spontaneously with glutathione, an abundant metabolite in fungal cells. The glutathione S-transferase hmp2 catalyzes cis-trans isomerization of the 7',8' double bond with equilibrium favoring the trans isomer. The hpm6-encoded transporter might preferentially pump hypothemycin out of the cell relative to the trans isomer aigialomycin A. The cis-to-trans isomerization may be coupled with C-4' hydroxylation, since all known hypothemycin analogs containing the enone functional group also have hydroxyl groups at both C-4' and C-5'. This Hypomyces subiculosus (Nectria subiculosa) protein is FAD-linked oxidoreductase hmp9.